A 354-amino-acid polypeptide reads, in one-letter code: Glycerol-3-phosphate dehydrogenase [NAD(P)+] (354 aa).

S27, F28, R48, and K121 together coordinate NADPH. Positions 121 and 149 each coordinate sn-glycerol 3-phosphate. A153 contacts NADPH. Residues K204, D257, S267, R268, and N269 each coordinate sn-glycerol 3-phosphate. K204 (proton acceptor) is an active-site residue. NADPH is bound at residue R268. Residues V292 and E294 each coordinate NADPH.

It belongs to the NAD-dependent glycerol-3-phosphate dehydrogenase family.

The protein localises to the cytoplasm. The enzyme catalyses sn-glycerol 3-phosphate + NAD(+) = dihydroxyacetone phosphate + NADH + H(+). The catalysed reaction is sn-glycerol 3-phosphate + NADP(+) = dihydroxyacetone phosphate + NADPH + H(+). It participates in membrane lipid metabolism; glycerophospholipid metabolism. In terms of biological role, catalyzes the reduction of the glycolytic intermediate dihydroxyacetone phosphate (DHAP) to sn-glycerol 3-phosphate (G3P), the key precursor for phospholipid synthesis. The protein is Glycerol-3-phosphate dehydrogenase [NAD(P)+] of Pseudomonas fluorescens (strain Pf0-1).